Consider the following 104-residue polypeptide: Protein METHYLENE BLUE SENSITIVITY 2 (104 aa).

Over residues 1-11 the composition is skewed to basic residues; it reads MTGKAKPKKHT. Disordered stretches follow at residues 1–46 and 64–104; these read MTGK…GHAK and IHHE…SLKK. Basic and acidic residues-rich tracts occupy residues 36 to 46 and 73 to 82; these read RTGKEKGGHAK and LTYEEPRNLH.

It is found in the nucleus. The protein resides in the cytoplasm. It localises to the stress granule. In terms of biological role, required for acclimation to reactive oxygen species (ROS) responses downstream of beta-cyclocitral, including singlet oxygen 1O(2) detoxification reactions, especially upon light-mediated photooxidative stress, and leading to programmed cell death. Prevents leaf senescence. In Arabidopsis thaliana (Mouse-ear cress), this protein is Protein METHYLENE BLUE SENSITIVITY 2.